Here is a 101-residue protein sequence, read N- to C-terminus: Putative defensin-like protein 86 (101 aa).

Positions 1 to 27 are cleaved as a signal peptide; the sequence is MAITKMSSLIILSLMMLTFIYIPMISG. 4 disulfide bridges follow: Cys35–Cys71, Cys39–Cys59, Cys45–Cys69, and Cys49–Cys70.

Belongs to the DEFL family.

It localises to the secreted. The polypeptide is Putative defensin-like protein 86 (LCR82) (Arabidopsis thaliana (Mouse-ear cress)).